The sequence spans 609 residues: NADH-ubiquinone oxidoreductase chain 5 (609 aa).

A run of 15 helical transmembrane segments spans residues 6–26 (SSIL…MTNL), 35–55 (YATS…LLFF), 84–104 (YFSI…MQFS), 116–138 (RFIK…NNLF), 140–160 (LFIG…WWYG), 171–191 (AILY…WFCL), 240–260 (TPVS…FLMI), 272–292 (IMTA…ICAL), 300–319 (IVAF…LGIN), 330–350 (THAF…HSLN), 365–385 (MPFT…MPFL), 409–429 (MITL…IYFV), 456–476 (LALG…PTNI), 481–501 (MPWH…AIAL), and 581–601 (GLIK…FILH).

It belongs to the complex I subunit 5 family. As to quaternary structure, core subunit of respiratory chain NADH dehydrogenase (Complex I) which is composed of 45 different subunits.

Its subcellular location is the mitochondrion inner membrane. The catalysed reaction is a ubiquinone + NADH + 5 H(+)(in) = a ubiquinol + NAD(+) + 4 H(+)(out). Functionally, core subunit of the mitochondrial membrane respiratory chain NADH dehydrogenase (Complex I) which catalyzes electron transfer from NADH through the respiratory chain, using ubiquinone as an electron acceptor. Essential for the catalytic activity and assembly of complex I. The sequence is that of NADH-ubiquinone oxidoreductase chain 5 from Rattus norvegicus (Rat).